The chain runs to 246 residues: 14-3-3 protein beta/alpha (246 aa).

M1 bears the N-acetylmethionine mark. T2 carries the post-translational modification N-acetylthreonine; in 14-3-3 protein beta/alpha, N-terminally processed. T2 is modified (phosphothreonine). Position 5 is an N6-acetyllysine (K5). Position 51 is an N6-acetyllysine; alternate (K51). K51 participates in a covalent cross-link: Glycyl lysine isopeptide (Lys-Gly) (interchain with G-Cter in SUMO2); alternate. The residue at position 60 (S60) is a Phosphoserine. K70 carries the post-translational modification N6-acetyllysine. 3'-nitrotyrosine is present on residues Y84 and Y106. K117 is subject to N6-acetyllysine. Residues S186 and S232 each carry the phosphoserine modification.

This sequence belongs to the 14-3-3 family. Homodimer. Interacts with SAMSN1 and PRKCE. Interacts with AKAP13. Interacts with SSH1 and TORC2/CRTC2. Interacts with ABL1; the interaction results in cytoplasmic location of ABL1 and inhibition of cABL-mediated apoptosis. Interacts with ROR2 (dimer); the interaction results in phosphorylation of YWHAB on tyrosine residues. Interacts with GAB2. Interacts with YAP1 (phosphorylated form). Interacts with the phosphorylated (by AKT1) form of SRPK2. Interacts with PKA-phosphorylated AANAT. Interacts with MYO1C. Interacts with SIRT2. Interacts with the 'Thr-369' phosphorylated form of DAPK2. Interacts with PI4KB, TBC1D22A and TBC1D22B. Interacts with the 'Ser-1134' and 'Ser-1161' phosphorylated form of SOS1. Interacts (via phosphorylated form) with YWHAB; this interaction occurs in a protein kinase AKT1-dependent manner. Interacts with SLITRK1. Interacts with SYNPO2 (phosphorylated form); YWHAB competes with ACTN2 for interaction with SYNPO2. Interacts with RIPOR2 (via phosphorylated form); this interaction occurs in a chemokine-dependent manner and does not compete for binding of RIPOR2 with RHOA nor blocks inhibition of RIPOR2-mediated RHOA activity. Interacts with MARK2 and MARK3. Interacts with TESK1; the interaction is dependent on the phosphorylation of TESK1 'Ser-439' and inhibits TESK1 kinase activity. Interacts with MEFV. Interacts with HDAC4. Interacts with ADAM22 (via C-terminus). The alpha, brain-specific form differs from the beta form in being phosphorylated. Phosphorylated on Ser-60 by protein kinase C delta type catalytic subunit in a sphingosine-dependent fashion. Post-translationally, isoform Short contains a N-acetylmethionine at position 1.

It localises to the cytoplasm. Its subcellular location is the melanosome. In terms of biological role, adapter protein implicated in the regulation of a large spectrum of both general and specialized signaling pathways. Binds to a large number of partners, usually by recognition of a phosphoserine or phosphothreonine motif. Binding generally results in the modulation of the activity of the binding partner. Negative regulator of osteogenesis. Blocks the nuclear translocation of the phosphorylated form (by AKT1) of SRPK2 and antagonizes its stimulatory effect on cyclin D1 expression resulting in blockage of neuronal apoptosis elicited by SRPK2. Negative regulator of signaling cascades that mediate activation of MAP kinases via AKAP13. In Rattus norvegicus (Rat), this protein is 14-3-3 protein beta/alpha (Ywhab).